Reading from the N-terminus, the 275-residue chain is 3-methyl-2-oxobutanoate hydroxymethyltransferase (275 aa).

D44 and D83 together coordinate Mg(2+). 3-methyl-2-oxobutanoate-binding positions include D44 to S45, D83, and K113. E115 contributes to the Mg(2+) binding site. Residue E182 is the Proton acceptor of the active site.

Belongs to the PanB family. As to quaternary structure, homodecamer; pentamer of dimers. The cofactor is Mg(2+).

It localises to the cytoplasm. It carries out the reaction 3-methyl-2-oxobutanoate + (6R)-5,10-methylene-5,6,7,8-tetrahydrofolate + H2O = 2-dehydropantoate + (6S)-5,6,7,8-tetrahydrofolate. It functions in the pathway cofactor biosynthesis; (R)-pantothenate biosynthesis; (R)-pantoate from 3-methyl-2-oxobutanoate: step 1/2. Its function is as follows. Catalyzes the reversible reaction in which hydroxymethyl group from 5,10-methylenetetrahydrofolate is transferred onto alpha-ketoisovalerate to form ketopantoate. The chain is 3-methyl-2-oxobutanoate hydroxymethyltransferase from Clostridium botulinum (strain Alaska E43 / Type E3).